The following is a 513-amino-acid chain: Protein CYCLOPS (513 aa).

A disordered region spans residues Gln-327 to Lys-435. Residues Ser-334–Pro-347 are compositionally biased toward low complexity. The span at Pro-359–Arg-381 shows a compositional bias: polar residues. Basic and acidic residues predominate over residues Gly-384–Asp-396. 2 consecutive short sequence motifs (nuclear localization signal) follow at residues Arg-397 to Arg-401 and Lys-421 to Arg-424. The stretch at Met-447–Ile-513 forms a coiled coil.

It belongs to the CYCLOPS family.

It is found in the nucleus. In terms of biological role, involved symbiotic signaling. Required for root infection by symbiotic rhizobia, infection thread (IT) formation, and nodule development. Required for symbiosome formation (i.e. the release of the bacteria from the ITs) and subsequent symbiosome development. Involved in arbuscular mycorrhizal (AM) symbiosis. In Pisum sativum (Garden pea), this protein is Protein CYCLOPS.